A 221-amino-acid chain; its full sequence is UPF0758 protein YicR (221 aa).

One can recognise an MPN domain in the interval 99 to 221 (ALLSPEMTRE…YVSFAERGWI (123 aa)). His170, His172, and Asp183 together coordinate Zn(2+). The JAMM motif motif lies at 170–183 (HNHPSGCAEPSKAD).

This sequence belongs to the UPF0758 family. YicR subfamily.

This is UPF0758 protein YicR from Salmonella newport (strain SL254).